The following is a 227-amino-acid chain: UPF0173 metal-dependent hydrolase BCE33L4354 (227 aa).

This sequence belongs to the UPF0173 family.

This chain is UPF0173 metal-dependent hydrolase BCE33L4354, found in Bacillus cereus (strain ZK / E33L).